Here is a 129-residue protein sequence, read N- to C-terminus: MAPKAEKKPASKAPAEKKPAAKKTATSGTKKRSKTRKETYSSYIYKVLKQTHPDTGISQKAMSIMNSFVNDIFERIAGEASKLAAYNKKSTISAREIQTAVRLILPGELAKHAVSEGTRAVTKYSSAAN.

Residues 1 to 19 (MAPKAEKKPASKAPAEKKP) show a composition bias toward basic and acidic residues. The tract at residues 1–38 (MAPKAEKKPASKAPAEKKPAAKKTATSGTKKRSKTRKE) is disordered. N6-acetyllysine; alternate is present on residues Lys-7 and Lys-8. Residues Lys-7 and Lys-8 each participate in a glycyl lysine isopeptide (Lys-Gly) (interchain with G-Cter in SUMO); alternate cross-link. Phosphoserine is present on Ser-11. The residue at position 12 (Lys-12) is an N6-acetyllysine. Position 17 is an N6-acetyllysine; alternate (Lys-17). Residue Lys-17 forms a Glycyl lysine isopeptide (Lys-Gly) (interchain with G-Cter in SUMO); alternate linkage. Lys-18 participates in a covalent cross-link: Glycyl lysine isopeptide (Lys-Gly) (interchain with G-Cter in SUMO). Residue Lys-123 forms a Glycyl lysine isopeptide (Lys-Gly) (interchain with G-Cter in ubiquitin) linkage.

This sequence belongs to the histone H2B family. The nucleosome is a histone octamer containing two molecules each of H2A, H2B, H3 and H4 assembled in one H3-H4 heterotetramer and two H2A-H2B heterodimers. The octamer wraps approximately 147 bp of DNA. Post-translationally, monoubiquitinated by the UBC2-BRE1 complex to form H2BK123ub1. H2BK123ub1 gives a specific tag for epigenetic transcriptional activation and is also prerequisite for H3K4me and H3K79me formation. H2BK123ub1 also modulates the formation of double-strand breaks during meiosis and is a prerequisite for DNA-damage checkpoint activation. In terms of processing, phosphorylated by STE20 to form H2BS10ph during progression through meiotic prophase. May be correlated with chromosome condensation. Acetylated by GCN5 to form H2BK11ac and H2BK16ac. H2BK16ac can also be formed by ESA1. Acetylation of N-terminal lysines and particularly formation of H2BK11acK16ac has a positive effect on transcription. Post-translationally, sumoylation to form H2BK6su or H2BK7su, and probably also H2BK16su or H2BK17su, occurs preferentially near the telomeres and represses gene transcription.

Its subcellular location is the nucleus. The protein localises to the chromosome. Its function is as follows. Core component of nucleosome. Nucleosomes wrap and compact DNA into chromatin, limiting DNA accessibility to the cellular machineries which require DNA as a template. Histones thereby play a central role in transcription regulation, DNA repair, DNA replication and chromosomal stability. DNA accessibility is regulated via a complex set of post-translational modifications of histones, also called histone code, and nucleosome remodeling. The protein is Histone H2B.2 (HTB2) of Debaryomyces hansenii (strain ATCC 36239 / CBS 767 / BCRC 21394 / JCM 1990 / NBRC 0083 / IGC 2968) (Yeast).